The sequence spans 227 residues: 2,3-bisphosphoglycerate-dependent phosphoglycerate mutase (227 aa).

Residues 7 to 14 (RHGQSEWN), 20 to 21 (TG), arginine 59, 86 to 89 (ERHY), lysine 97, 113 to 114 (RR), and 182 to 183 (GN) contribute to the substrate site. The active-site Tele-phosphohistidine intermediate is the histidine 8. The active-site Proton donor/acceptor is glutamate 86.

The protein belongs to the phosphoglycerate mutase family. BPG-dependent PGAM subfamily. In terms of assembly, homodimer.

The catalysed reaction is (2R)-2-phosphoglycerate = (2R)-3-phosphoglycerate. Its pathway is carbohydrate degradation; glycolysis; pyruvate from D-glyceraldehyde 3-phosphate: step 3/5. Its function is as follows. Catalyzes the interconversion of 2-phosphoglycerate and 3-phosphoglycerate. This Neisseria gonorrhoeae (strain ATCC 700825 / FA 1090) protein is 2,3-bisphosphoglycerate-dependent phosphoglycerate mutase.